We begin with the raw amino-acid sequence, 142 residues long: Nucleoside diphosphate kinase (142 aa).

6 residues coordinate ATP: Lys-11, Phe-59, Arg-87, Thr-93, Arg-104, and Asn-114. His-117 acts as the Pros-phosphohistidine intermediate in catalysis.

The protein belongs to the NDK family. As to quaternary structure, homotetramer. It depends on Mg(2+) as a cofactor.

The protein resides in the cytoplasm. It carries out the reaction a 2'-deoxyribonucleoside 5'-diphosphate + ATP = a 2'-deoxyribonucleoside 5'-triphosphate + ADP. The enzyme catalyses a ribonucleoside 5'-diphosphate + ATP = a ribonucleoside 5'-triphosphate + ADP. Major role in the synthesis of nucleoside triphosphates other than ATP. The ATP gamma phosphate is transferred to the NDP beta phosphate via a ping-pong mechanism, using a phosphorylated active-site intermediate. This Salinibacter ruber (strain DSM 13855 / M31) protein is Nucleoside diphosphate kinase.